Consider the following 337-residue polypeptide: Adenosine deaminase (337 aa).

The Zn(2+) site is built by His-12 and His-14. 3 residues coordinate substrate: His-14, Asp-16, and Gly-170. His-197 is a Zn(2+) binding site. Residue Glu-200 is the Proton donor of the active site. Asp-278 serves as a coordination point for Zn(2+). A substrate-binding site is contributed by Asp-279.

It belongs to the metallo-dependent hydrolases superfamily. Adenosine and AMP deaminases family. Adenosine deaminase subfamily. Requires Zn(2+) as cofactor.

It catalyses the reaction adenosine + H2O + H(+) = inosine + NH4(+). The catalysed reaction is 2'-deoxyadenosine + H2O + H(+) = 2'-deoxyinosine + NH4(+). Catalyzes the hydrolytic deamination of adenosine and 2-deoxyadenosine. The protein is Adenosine deaminase of Pectobacterium atrosepticum (strain SCRI 1043 / ATCC BAA-672) (Erwinia carotovora subsp. atroseptica).